The primary structure comprises 92 residues: MTKRTKKARIVGKYGTRYGASLRKQIKKMEVSQHNKYFCEFCGKYSVKRKVVGIWGCKDCGKVKAGGAYTMNTASAVTVRSTIRRLREQTES.

A C4-type zinc finger spans residues 39–60; it reads CEFCGKYSVKRKVVGIWGCKDC.

It belongs to the eukaryotic ribosomal protein eL43 family.

This Arabidopsis thaliana (Mouse-ear cress) protein is Large ribosomal subunit protein eL43z (RPL37AB).